Consider the following 206-residue polypeptide: Large ribosomal subunit protein uL4 (206 aa).

The protein belongs to the universal ribosomal protein uL4 family. Part of the 50S ribosomal subunit.

One of the primary rRNA binding proteins, this protein initially binds near the 5'-end of the 23S rRNA. It is important during the early stages of 50S assembly. It makes multiple contacts with different domains of the 23S rRNA in the assembled 50S subunit and ribosome. In terms of biological role, forms part of the polypeptide exit tunnel. This is Large ribosomal subunit protein uL4 from Nitratidesulfovibrio vulgaris (strain ATCC 29579 / DSM 644 / CCUG 34227 / NCIMB 8303 / VKM B-1760 / Hildenborough) (Desulfovibrio vulgaris).